Here is an 829-residue protein sequence, read N- to C-terminus: Leucine--tRNA ligase (829 aa).

The short motif at 40-51 (PYPSGAGLHVGH) is the 'HIGH' region element. The 'KMSKS' region motif lies at 609–613 (KMSKS). Lys612 provides a ligand contact to ATP.

This sequence belongs to the class-I aminoacyl-tRNA synthetase family.

It localises to the cytoplasm. The catalysed reaction is tRNA(Leu) + L-leucine + ATP = L-leucyl-tRNA(Leu) + AMP + diphosphate. The polypeptide is Leucine--tRNA ligase (Lactococcus lactis subsp. lactis (strain IL1403) (Streptococcus lactis)).